The sequence spans 146 residues: Hemoglobin subunit beta (146 aa).

At valine 1 the chain carries N-acetylvaline. A Globin domain is found at 2-146 (HLTPEEKTAV…VANALAHKYH (145 aa)). Threonine 12 is subject to Phosphothreonine. A Phosphoserine modification is found at serine 44. N6-acetyllysine is present on lysine 59. Histidine 63 serves as a coordination point for heme b. N6-acetyllysine is present on lysine 82. A heme b-binding site is contributed by histidine 92. Cysteine 93 bears the S-nitrosocysteine mark. The residue at position 144 (lysine 144) is an N6-acetyllysine.

The protein belongs to the globin family. As to quaternary structure, heterotetramer of two alpha chains and two beta chains. In terms of tissue distribution, red blood cells.

Functionally, involved in oxygen transport from the lung to the various peripheral tissues. This is Hemoglobin subunit beta (HBB) from Chlorocebus aethiops (Green monkey).